A 363-amino-acid chain; its full sequence is Putative dipeptidase YkvY (363 aa).

Mn(2+) is bound by residues aspartate 222, aspartate 233, histidine 297, glutamate 326, and glutamate 340.

Belongs to the peptidase M24B family. The cofactor is Mn(2+).

The chain is Putative dipeptidase YkvY (ykvY) from Bacillus subtilis (strain 168).